The sequence spans 129 residues: Follitropin subunit beta (129 aa).

A signal peptide spans 1-20 (MKSVQFCFLFCCWRAICCRS). 6 cysteine pairs are disulfide-bonded: cysteine 21–cysteine 69, cysteine 35–cysteine 84, cysteine 38–cysteine 122, cysteine 46–cysteine 100, cysteine 50–cysteine 102, and cysteine 105–cysteine 112. Residues asparagine 25 and asparagine 42 are each glycosylated (N-linked (GlcNAc...) asparagine).

The protein belongs to the glycoprotein hormones subunit beta family. Heterodimer. The active follitropin is a heterodimer composed of an alpha chain/CGA shared with other hormones and a unique beta chain/FSHB shown here.

The protein localises to the secreted. Together with the alpha chain CGA constitutes follitropin, the follicle-stimulating hormone, and provides its biological specificity to the hormone heterodimer. Binds FSHR, a G protein-coupled receptor, on target cells to activate downstream signaling pathways. Follitropin is involved in follicle development and spermatogenesis in reproductive organs. The chain is Follitropin subunit beta (FSHB) from Bubalus bubalis (Domestic water buffalo).